A 249-amino-acid chain; its full sequence is 1-(5-phosphoribosyl)-5-[(5-phosphoribosylamino)methylideneamino] imidazole-4-carboxamide isomerase (249 aa).

Aspartate 11 functions as the Proton acceptor in the catalytic mechanism. Aspartate 133 serves as the catalytic Proton donor.

It belongs to the HisA/HisF family.

The protein resides in the cytoplasm. The enzyme catalyses 1-(5-phospho-beta-D-ribosyl)-5-[(5-phospho-beta-D-ribosylamino)methylideneamino]imidazole-4-carboxamide = 5-[(5-phospho-1-deoxy-D-ribulos-1-ylimino)methylamino]-1-(5-phospho-beta-D-ribosyl)imidazole-4-carboxamide. The protein operates within amino-acid biosynthesis; L-histidine biosynthesis; L-histidine from 5-phospho-alpha-D-ribose 1-diphosphate: step 4/9. The sequence is that of 1-(5-phosphoribosyl)-5-[(5-phosphoribosylamino)methylideneamino] imidazole-4-carboxamide isomerase from Haemophilus influenzae (strain 86-028NP).